Here is a 426-residue protein sequence, read N- to C-terminus: GTPase HflX (426 aa).

The Hflx-type G domain occupies 198–365 (PTVSLVGYTN…ALTERLSGEV (168 aa)). Residues 204-211 (GYTNAGKS), 229-233 (FATLD), 251-254 (DTVG), 317-320 (NKID), and 343-345 (SAQ) contribute to the GTP site. S211 and T231 together coordinate Mg(2+).

Belongs to the TRAFAC class OBG-HflX-like GTPase superfamily. HflX GTPase family. In terms of assembly, monomer. Associates with the 50S ribosomal subunit. This interaction occurs in the presence of GTP, GDP, ATP or ADP, but not in their absence. It depends on Mg(2+) as a cofactor.

It is found in the cytoplasm. With respect to regulation, intrinsic GTPase activity is very slow and can be stimulated by the presence of 50S ribosomal subunits or 70S ribosomes. GTPase activity is inhibited by ATP. GTPase that associates with the 50S ribosomal subunit and may have a role during protein synthesis or ribosome biogenesis. In vitro, also exhibits ATPase activity. The chain is GTPase HflX from Escherichia coli (strain K12).